The primary structure comprises 546 residues: Thermolysin (546 aa).

The N-terminal stretch at 1–25 (MDKRAMLGAIGLAFGLMAWPFGASA) is a signal peptide. Residues 26–228 (KEKSMVWNEQ…EAKPGGGQPV (203 aa)) constitute a propeptide, activation peptide. Asp287, Asp289, Gln291, and Asp368 together coordinate Ca(2+). His372 lines the Zn(2+) pocket. The active site involves Glu373. The Zn(2+) site is built by His376 and Glu396. The Ca(2+) site is built by Asn413, Asp415, Glu417, Glu420, Tyr423, Thr424, Ile427, and Asp430. His461 functions as the Proton donor in the catalytic mechanism.

This sequence belongs to the peptidase M4 family. It depends on Ca(2+) as a cofactor. Requires Zn(2+) as cofactor.

The protein localises to the secreted. It carries out the reaction Preferential cleavage: Xaa-|-Leu &gt; Xaa-|-Phe.. Functionally, extracellular zinc metalloprotease. The polypeptide is Thermolysin (npr) (Bacillus caldolyticus).